Consider the following 796-residue polypeptide: Nuclear GTPase SLIP-GC (796 aa).

The span at Met1–Glu22 shows a compositional bias: basic and acidic residues. Residues Met1–Arg35 form a disordered region. Gly107–Ser114 is a binding site for GTP. Coiled-coil stretches lie at residues Ser158–Asp185 and Lys745–Lys775.

In terms of tissue distribution, expressed in germinal center B-cell and in lymphomas derived from germinal center B-cell.

It is found in the nucleus speckle. Functionally, nuclear GTPase found in germinal center B-cells, where it may inhibit function of the activation-induced cytidine deaminase AICDA. Reduces somatic hypermutation in B-cells which may enhance genome stability. The polypeptide is Nuclear GTPase SLIP-GC (NUGGC) (Homo sapiens (Human)).